The following is a 361-amino-acid chain: Phospho-N-acetylmuramoyl-pentapeptide-transferase (361 aa).

The next 10 helical transmembrane spans lie at 28 to 48 (LAIIITLSLSFITGPILIKFL), 74 to 94 (TMGGIMIILSSCLSTLLLADL), 99 to 119 (IWITLFGFISFGIIGFMDDYA), 133 to 153 (SKLLLQGIISLIICILLEYLD), 168 to 188 (LSLDLGYFYIVFAIFVIVGSS), 203 to 223 (VPIAFTAGSFALISYLVGNLI), 236 to 256 (TGELTVLCAGLVGSCLGFLWF), 263 to 283 (VFMGDTGSLSLGGVLGIISVI), 288 to 308 (IVLAIVGGLFVIETASVILQV), and 338 to 358 (KVVIRFWIISVIFALIGLSSL).

This sequence belongs to the glycosyltransferase 4 family. MraY subfamily. The cofactor is Mg(2+).

The protein localises to the cell inner membrane. The catalysed reaction is UDP-N-acetyl-alpha-D-muramoyl-L-alanyl-gamma-D-glutamyl-meso-2,6-diaminopimeloyl-D-alanyl-D-alanine + di-trans,octa-cis-undecaprenyl phosphate = di-trans,octa-cis-undecaprenyl diphospho-N-acetyl-alpha-D-muramoyl-L-alanyl-D-glutamyl-meso-2,6-diaminopimeloyl-D-alanyl-D-alanine + UMP. It functions in the pathway cell wall biogenesis; peptidoglycan biosynthesis. Its function is as follows. Catalyzes the initial step of the lipid cycle reactions in the biosynthesis of the cell wall peptidoglycan: transfers peptidoglycan precursor phospho-MurNAc-pentapeptide from UDP-MurNAc-pentapeptide onto the lipid carrier undecaprenyl phosphate, yielding undecaprenyl-pyrophosphoryl-MurNAc-pentapeptide, known as lipid I. The protein is Phospho-N-acetylmuramoyl-pentapeptide-transferase of Rickettsia felis (strain ATCC VR-1525 / URRWXCal2) (Rickettsia azadi).